The sequence spans 90 residues: Probable Fe(2+)-trafficking protein (90 aa).

Belongs to the Fe(2+)-trafficking protein family. Monomer.

In terms of biological role, could be a mediator in iron transactions between iron acquisition and iron-requiring processes, such as synthesis and/or repair of Fe-S clusters in biosynthetic enzymes. The sequence is that of Probable Fe(2+)-trafficking protein from Enterobacter sp. (strain 638).